Reading from the N-terminus, the 218-residue chain is Ribose-5-phosphate isomerase A (218 aa).

Substrate is bound by residues 28–31, 81–84, and 94–97; these read TGST, DGAD, and KGGG. The active-site Proton acceptor is the Glu-103. Position 121 (Lys-121) interacts with substrate.

The protein belongs to the ribose 5-phosphate isomerase family. Homodimer.

It catalyses the reaction aldehydo-D-ribose 5-phosphate = D-ribulose 5-phosphate. The protein operates within carbohydrate degradation; pentose phosphate pathway; D-ribose 5-phosphate from D-ribulose 5-phosphate (non-oxidative stage): step 1/1. Its function is as follows. Catalyzes the reversible conversion of ribose-5-phosphate to ribulose 5-phosphate. The protein is Ribose-5-phosphate isomerase A of Vibrio cholerae serotype O1 (strain ATCC 39541 / Classical Ogawa 395 / O395).